A 448-amino-acid chain; its full sequence is N-succinylarginine dihydrolase (448 aa).

Substrate is bound by residues 19–28 (GGLSYGNVAS), N110, and 137–138 (HR). Residue E174 is part of the active site. R214 contacts substrate. The active site involves H250. 2 residues coordinate substrate: D252 and N365. The Nucleophile role is filled by C371.

This sequence belongs to the succinylarginine dihydrolase family. In terms of assembly, homodimer.

The enzyme catalyses N(2)-succinyl-L-arginine + 2 H2O + 2 H(+) = N(2)-succinyl-L-ornithine + 2 NH4(+) + CO2. It functions in the pathway amino-acid degradation; L-arginine degradation via AST pathway; L-glutamate and succinate from L-arginine: step 2/5. Its function is as follows. Catalyzes the hydrolysis of N(2)-succinylarginine into N(2)-succinylornithine, ammonia and CO(2). In Pseudomonas syringae pv. syringae (strain B728a), this protein is N-succinylarginine dihydrolase.